We begin with the raw amino-acid sequence, 410 residues long: 3-phosphoshikimate 1-carboxyvinyltransferase (410 aa).

3 residues coordinate 3-phosphoshikimate: lysine 20, serine 21, and arginine 25. Lysine 20 contacts phosphoenolpyruvate. Arginine 115 contributes to the phosphoenolpyruvate binding site. Positions 157, 158, 159, 183, 293, and 320 each coordinate 3-phosphoshikimate. Glutamine 159 is a binding site for phosphoenolpyruvate. Catalysis depends on aspartate 293, which acts as the Proton acceptor. Phosphoenolpyruvate is bound by residues arginine 324, arginine 365, and lysine 391.

This sequence belongs to the EPSP synthase family. In terms of assembly, monomer.

It is found in the cytoplasm. It catalyses the reaction 3-phosphoshikimate + phosphoenolpyruvate = 5-O-(1-carboxyvinyl)-3-phosphoshikimate + phosphate. The protein operates within metabolic intermediate biosynthesis; chorismate biosynthesis. Its function is as follows. Catalyzes the transfer of the enolpyruvyl moiety of phosphoenolpyruvate (PEP) to the 5-hydroxyl of shikimate-3-phosphate (S3P) to produce enolpyruvyl shikimate-3-phosphate and inorganic phosphate. The sequence is that of 3-phosphoshikimate 1-carboxyvinyltransferase from Thermoplasma acidophilum (strain ATCC 25905 / DSM 1728 / JCM 9062 / NBRC 15155 / AMRC-C165).